We begin with the raw amino-acid sequence, 371 residues long: MLNEFIAIRRELHQIPETGYKELKTQAYLLDYISKLPSEHLEVKKWRTGILVLVKGNNPEKTIGYRTDIDALPITEETGLPFASKHPGNMHACGHDLHMSIALGVLTHFASKPAKDNLLFVFQPAEEGPGGAKPIMESAEFAEWRPDSIYGLHIAPEYKVGEIAIKPGLLFANTSELFISFKGKGGHAAYPHLANDMVVAASAFVGQMQTIISRNIDPMDSAVITIGRIHGGEIQNVIAETAYLDGTIRTLSPETMQIVWTRLKQLAKGWEEAYQCEVEFHPGSDYYQVDNDPVETEEFIHFLEEQYPESYVPARSAMTGEDFGYFLSEIKGFMFWLGVDSEYSLHHAKLSPKEEAIPFAIDVLIHFLESK.

Residue aspartate 68 is part of the active site. Glutamate 127 acts as the Proton acceptor in catalysis.

It belongs to the peptidase M20A family. N-acetyldiaminopimelate deacetylase subfamily.

It carries out the reaction N-acetyl-(2S,6S)-2,6-diaminopimelate + H2O = (2S,6S)-2,6-diaminopimelate + acetate. Its pathway is amino-acid biosynthesis; L-lysine biosynthesis via DAP pathway; LL-2,6-diaminopimelate from (S)-tetrahydrodipicolinate (acetylase route): step 3/3. In terms of biological role, catalyzes the conversion of N-acetyl-diaminopimelate to diaminopimelate and acetate. In Listeria monocytogenes serotype 4a (strain HCC23), this protein is N-acetyldiaminopimelate deacetylase.